We begin with the raw amino-acid sequence, 432 residues long: Cyclic 2,3-diphosphoglycerate synthetase (432 aa).

Belongs to the cyclic 2,3-diphosphoglycerate synthetase family.

It localises to the cytoplasm. The enzyme catalyses (2R)-2,3-bisphosphoglycerate + ATP + H(+) = cyclic (2R)-2,3-bisphosphoglycerate + ADP + phosphate. Its function is as follows. Catalyzes the formation of cyclic 2,3-diphosphoglycerate (cDPG) by formation of an intramolecular phosphoanhydride bond at the expense of ATP. This is Cyclic 2,3-diphosphoglycerate synthetase from Thermococcus kodakarensis (strain ATCC BAA-918 / JCM 12380 / KOD1) (Pyrococcus kodakaraensis (strain KOD1)).